The chain runs to 116 residues: SPbeta prophage-derived uncharacterized protein YomQ (116 aa).

The polypeptide is SPbeta prophage-derived uncharacterized protein YomQ (yomQ) (Bacillus subtilis (strain 168)).